A 1050-amino-acid polypeptide reads, in one-letter code: Mitotic checkpoint serine/threonine-protein kinase BUB1 beta (1050 aa).

Residues 62–226 (FEYEIRFYTG…FESSVPQRST (165 aa)) form the BUB1 N-terminal domain. The Nuclear localization signal motif lies at 111–118 (GEKRYYSD). The interval 152-185 (AQFYISWAEEYEARENFRKADAIFQEGIQQKAEP) is necessary for interaction with KNL1. The D-box motif lies at 224-232 (RSTLAELKS). The residue at position 250 (Lys-250) is an N6-acetyllysine; by PCAF. A Phosphoserine modification is found at Ser-367. Residues 368–393 (TRKPGKEEGDPLQRVQSHQQASEEKK) form a disordered region. The residue at position 435 (Ser-435) is a Phosphoserine. Residues 456–480 (IQTTQQERTGDQQEETMPTKETTKL) form a disordered region. Phosphoserine occurs at positions 543, 665, and 670. Residue Ser-676 is modified to Phosphoserine; by PLK1. The residue at position 697 (Ser-697) is a Phosphoserine. The Protein kinase domain maps to 766–1050 (YCIKREYLIC…LTSPGALLFQ (285 aa)). Residue 772–780 (YLICEDYKL) coordinates ATP. Thr-792 carries the post-translational modification Phosphothreonine; by PLK1. Lys-795 contributes to the ATP binding site. Asp-882 acts as the Proton acceptor in catalysis. Phosphothreonine; by PLK1 is present on Thr-1008. At Thr-1042 the chain carries Phosphothreonine. Ser-1043 is subject to Phosphoserine.

Belongs to the protein kinase superfamily. Ser/Thr protein kinase family. BUB1 subfamily. As to quaternary structure, interacts with CENPE. Interacts with PLK1. Part of a complex containing BUB3, CDC20 and BUB1B. Interacts with anaphase-promoting complex/cyclosome (APC/C). Interacts with KNL1. Interacts with KAT2B. Interacts with RIPK3. Interacts with the closed conformation form of MAD2L1. In terms of processing, proteolytically cleaved by caspase-3 in a cell cycle specific manner. The cleavage might be involved in the durability of the cell cycle delay. Caspase-3 cleavage is associated with abrogation of the mitotic checkpoint. The major site of cleavage is at Asp-610. Acetylation at Lys-250 regulates its degradation and timing in anaphase entry. Post-translationally, ubiquitinated. Degraded by the proteasome. Ubiquitinated by UBR5, promoting disassembly of the mitotic checkpoint complex from the APC/C complex. In terms of processing, sumoylated with SUMO2 and SUMO3. The sumoylation mediates the association with CENPE at the kinetochore. Autophosphorylated in vitro. Intramolecular autophosphorylation is stimulated by CENPE. Phosphorylated during mitosis and hyperphosphorylated in mitotically arrested cells. Phosphorylation at Ser-670 and Ser-1043 occurs at kinetochores upon mitotic entry with dephosphorylation at the onset of anaphase. In terms of tissue distribution, highly expressed in thymus followed by spleen. Preferentially expressed in tissues with a high mitotic index.

It localises to the cytoplasm. Its subcellular location is the nucleus. The protein resides in the chromosome. The protein localises to the centromere. It is found in the kinetochore. It localises to the cytoskeleton. Its subcellular location is the microtubule organizing center. The protein resides in the centrosome. The catalysed reaction is L-seryl-[protein] + ATP = O-phospho-L-seryl-[protein] + ADP + H(+). It catalyses the reaction L-threonyl-[protein] + ATP = O-phospho-L-threonyl-[protein] + ADP + H(+). Kinase activity stimulated by CENPE. Its function is as follows. Essential component of the mitotic checkpoint. Required for normal mitosis progression. The mitotic checkpoint delays anaphase until all chromosomes are properly attached to the mitotic spindle. One of its checkpoint functions is to inhibit the activity of the anaphase-promoting complex/cyclosome (APC/C) by blocking the binding of CDC20 to APC/C, independently of its kinase activity. The other is to monitor kinetochore activities that depend on the kinetochore motor CENPE. Required for kinetochore localization of CENPE. Negatively regulates PLK1 activity in interphase cells and suppresses centrosome amplification. Also implicated in triggering apoptosis in polyploid cells that exit aberrantly from mitotic arrest. May play a role for tumor suppression. This is Mitotic checkpoint serine/threonine-protein kinase BUB1 beta (BUB1B) from Homo sapiens (Human).